The following is a 222-amino-acid chain: Phosphoribosylformylglycinamidine synthase subunit PurQ (222 aa).

The Glutamine amidotransferase type-1 domain occupies serine 3 to alanine 222. Catalysis depends on cysteine 86, which acts as the Nucleophile. Active-site residues include histidine 196 and glutamate 198.

As to quaternary structure, part of the FGAM synthase complex composed of 1 PurL, 1 PurQ and 2 PurS subunits.

The protein localises to the cytoplasm. It catalyses the reaction N(2)-formyl-N(1)-(5-phospho-beta-D-ribosyl)glycinamide + L-glutamine + ATP + H2O = 2-formamido-N(1)-(5-O-phospho-beta-D-ribosyl)acetamidine + L-glutamate + ADP + phosphate + H(+). The enzyme catalyses L-glutamine + H2O = L-glutamate + NH4(+). It functions in the pathway purine metabolism; IMP biosynthesis via de novo pathway; 5-amino-1-(5-phospho-D-ribosyl)imidazole from N(2)-formyl-N(1)-(5-phospho-D-ribosyl)glycinamide: step 1/2. In terms of biological role, part of the phosphoribosylformylglycinamidine synthase complex involved in the purines biosynthetic pathway. Catalyzes the ATP-dependent conversion of formylglycinamide ribonucleotide (FGAR) and glutamine to yield formylglycinamidine ribonucleotide (FGAM) and glutamate. The FGAM synthase complex is composed of three subunits. PurQ produces an ammonia molecule by converting glutamine to glutamate. PurL transfers the ammonia molecule to FGAR to form FGAM in an ATP-dependent manner. PurS interacts with PurQ and PurL and is thought to assist in the transfer of the ammonia molecule from PurQ to PurL. The protein is Phosphoribosylformylglycinamidine synthase subunit PurQ of Mesorhizobium japonicum (strain LMG 29417 / CECT 9101 / MAFF 303099) (Mesorhizobium loti (strain MAFF 303099)).